The primary structure comprises 173 residues: Trafficking regulator of GLUT4 1 (173 aa).

The segment covering 1 to 17 has biased composition (polar residues); sequence MANPVQPQLQDPGSTSP. The disordered stretch occupies residues 1–22; the sequence is MANPVQPQLQDPGSTSPLDLPE. At 1–102 the chain is on the cytoplasmic side; sequence MANPVQPQLQ…QDQEAPKDYL (102 aa). Residues Ser16, Ser43, Ser45, Ser70, Ser84, and Ser85 each carry the phosphoserine modification. Residues 103 to 123 constitute an intramembrane region (helical); it reads VLAIASCFCPVWPLNLIPLIF. At 124–150 the chain is on the cytoplasmic side; it reads SIMSRSSVQQGDLDGARRLGRLARLLS. The chain crosses the membrane as a helical span at residues 151-171; sequence ITFIILGIVIIIVAVTVNFTV. At 172 to 173 the chain is on the extracellular side; it reads PK.

It belongs to the CD225/Dispanin family. In terms of assembly, interacts with SLC2A4; the interaction is required for proper SLC2A4 reacycling after insulin stimulation. As to expression, present in adipose tissue and undetectable in other tissues (at protein level).

Its subcellular location is the cell membrane. It localises to the endomembrane system. It is found in the cytoplasm. The protein resides in the perinuclear region. Its function is as follows. Regulates insulin-mediated adipose tissue glucose uptake and transport by modulation of SLC2A4 recycling. Not required for SLC2A4 membrane fusion upon an initial stimulus, but rather is necessary for proper protein recycling during prolonged insulin stimulation. The chain is Trafficking regulator of GLUT4 1 from Rattus norvegicus (Rat).